Here is a 296-residue protein sequence, read N- to C-terminus: Phosphatidylglycerol--prolipoprotein diacylglyceryl transferase (296 aa).

The next 3 helical transmembrane spans lie at leucine 17–glycine 37, methionine 59–tyrosine 79, and glycine 97–tryptophan 117. Position 142 (arginine 142) interacts with a 1,2-diacyl-sn-glycero-3-phospho-(1'-sn-glycerol). 2 consecutive transmembrane segments (helical) span residues methionine 230–phenylalanine 250 and phenylalanine 257–leucine 277.

This sequence belongs to the Lgt family.

It localises to the cell inner membrane. The enzyme catalyses L-cysteinyl-[prolipoprotein] + a 1,2-diacyl-sn-glycero-3-phospho-(1'-sn-glycerol) = an S-1,2-diacyl-sn-glyceryl-L-cysteinyl-[prolipoprotein] + sn-glycerol 1-phosphate + H(+). Its pathway is protein modification; lipoprotein biosynthesis (diacylglyceryl transfer). Catalyzes the transfer of the diacylglyceryl group from phosphatidylglycerol to the sulfhydryl group of the N-terminal cysteine of a prolipoprotein, the first step in the formation of mature lipoproteins. This Burkholderia lata (strain ATCC 17760 / DSM 23089 / LMG 22485 / NCIMB 9086 / R18194 / 383) protein is Phosphatidylglycerol--prolipoprotein diacylglyceryl transferase.